The sequence spans 412 residues: Serine hydroxymethyltransferase (412 aa).

(6S)-5,6,7,8-tetrahydrofolate contacts are provided by residues leucine 117 and 121-123 (GHL). Lysine 226 is modified (N6-(pyridoxal phosphate)lysine).

It belongs to the SHMT family. In terms of assembly, homodimer. Pyridoxal 5'-phosphate is required as a cofactor.

It localises to the cytoplasm. It catalyses the reaction (6R)-5,10-methylene-5,6,7,8-tetrahydrofolate + glycine + H2O = (6S)-5,6,7,8-tetrahydrofolate + L-serine. Its pathway is one-carbon metabolism; tetrahydrofolate interconversion. The protein operates within amino-acid biosynthesis; glycine biosynthesis; glycine from L-serine: step 1/1. Functionally, catalyzes the reversible interconversion of serine and glycine with tetrahydrofolate (THF) serving as the one-carbon carrier. This reaction serves as the major source of one-carbon groups required for the biosynthesis of purines, thymidylate, methionine, and other important biomolecules. Also exhibits THF-independent aldolase activity toward beta-hydroxyamino acids, producing glycine and aldehydes, via a retro-aldol mechanism. The polypeptide is Serine hydroxymethyltransferase (Staphylococcus epidermidis (strain ATCC 35984 / DSM 28319 / BCRC 17069 / CCUG 31568 / BM 3577 / RP62A)).